The primary structure comprises 761 residues: Hyperosmolality-gated Ca2+ permeable channel 1.6 (761 aa).

10 helical membrane passes run 7–27, 101–121, 156–176, 375–395, 419–439, 467–487, 512–532, 583–603, 630–650, and 653–673; these read IGVA…AFAI, IYLL…TTMV, PRFW…CFIL, LIVG…IAFV, LLKS…FLLF, FYMF…TAFQ, ATFF…GEIL, AAVS…AFVV, VVTA…TKHA, and STPL…HCKN. Over residues 718-731 the composition is skewed to basic and acidic residues; the sequence is RVGEDPEPEEKLES. Residues 718-761 form a disordered region; sequence RVGEDPEPEEKLESDMSPPDLVATKRWSWRNTPLPSKDSCREIP.

Belongs to the CSC1 (TC 1.A.17) family.

It localises to the membrane. Its function is as follows. Acts as an osmosensitive calcium-permeable cation channel. In Arabidopsis thaliana (Mouse-ear cress), this protein is Hyperosmolality-gated Ca2+ permeable channel 1.6.